The sequence spans 131 residues: Large ribosomal subunit protein eL32 (131 aa).

Belongs to the eukaryotic ribosomal protein eL32 family.

In Eremothecium gossypii (strain ATCC 10895 / CBS 109.51 / FGSC 9923 / NRRL Y-1056) (Yeast), this protein is Large ribosomal subunit protein eL32 (RPL32).